The chain runs to 142 residues: Anti-sigma F factor (142 aa).

The protein belongs to the anti-sigma-factor family.

It carries out the reaction L-seryl-[protein] + ATP = O-phospho-L-seryl-[protein] + ADP + H(+). It catalyses the reaction L-threonyl-[protein] + ATP = O-phospho-L-threonyl-[protein] + ADP + H(+). Binds to sigma F and blocks its ability to form an RNA polymerase holoenzyme (E-sigma F). Phosphorylates SpoIIAA on a serine residue. This phosphorylation may enable SpoIIAA to act as an anti-anti-sigma factor that counteracts SpoIIAB and thus releases sigma F from inhibition. The polypeptide is Anti-sigma F factor (Clostridium kluyveri (strain NBRC 12016)).